We begin with the raw amino-acid sequence, 461 residues long: Ribulose bisphosphate carboxylase (461 aa).

Residue Asn113 participates in substrate binding. Lys168 functions as the Proton acceptor in the catalytic mechanism. Lys170 is a binding site for substrate. Mg(2+) contacts are provided by Lys193, Asp195, and Glu196. N6-carboxylysine is present on Lys193. His289 functions as the Proton acceptor in the catalytic mechanism. Arg290, His323, and Ser370 together coordinate substrate.

Belongs to the RuBisCO large chain family. Type II subfamily. As to quaternary structure, homodimer. It depends on Mg(2+) as a cofactor.

The enzyme catalyses 2 (2R)-3-phosphoglycerate + 2 H(+) = D-ribulose 1,5-bisphosphate + CO2 + H2O. The catalysed reaction is D-ribulose 1,5-bisphosphate + O2 = 2-phosphoglycolate + (2R)-3-phosphoglycerate + 2 H(+). In terms of biological role, ruBisCO catalyzes two reactions: the carboxylation of D-ribulose 1,5-bisphosphate, the primary event in carbon dioxide fixation, as well as the oxidative fragmentation of the pentose substrate. Both reactions occur simultaneously and in competition at the same active site. This is Ribulose bisphosphate carboxylase from Thiomonas intermedia (strain K12) (Thiobacillus intermedius).